The chain runs to 152 residues: Small heat shock protein HspA (152 aa).

In terms of domain architecture, sHSP spans 29 to 139 (TAGEANYPPC…KPRRIPIDNL (111 aa)).

Belongs to the small heat shock protein (HSP20) family.

This chain is Small heat shock protein HspA (hspA), found in Bradyrhizobium diazoefficiens (strain JCM 10833 / BCRC 13528 / IAM 13628 / NBRC 14792 / USDA 110).